The chain runs to 566 residues: Arginine--tRNA ligase (566 aa).

Positions 123 to 133 (PNVAKPFHVGH) match the 'HIGH' region motif.

Belongs to the class-I aminoacyl-tRNA synthetase family. Monomer.

The protein resides in the cytoplasm. It catalyses the reaction tRNA(Arg) + L-arginine + ATP = L-arginyl-tRNA(Arg) + AMP + diphosphate. The protein is Arginine--tRNA ligase of Alkaliphilus metalliredigens (strain QYMF).